We begin with the raw amino-acid sequence, 246 residues long: ATP synthase subunit a, chloroplastic (246 aa).

4 consecutive transmembrane segments (helical) span residues 35–55 (GQVFIVSWLVIAALIGFALVG), 94–114 (VPYIATVFLFIFGANWAGALI), 133–153 (INVTVALALLTSLSYFYAGLS), and 202–222 (VFALLVPILIPLPVMTLGLFA).

This sequence belongs to the ATPase A chain family. F-type ATPases have 2 components, CF(1) - the catalytic core - and CF(0) - the membrane proton channel. CF(1) has five subunits: alpha(3), beta(3), gamma(1), delta(1), epsilon(1). CF(0) has four main subunits: a, b, b' and c.

It localises to the plastid. It is found in the chloroplast thylakoid membrane. Key component of the proton channel; it plays a direct role in the translocation of protons across the membrane. The polypeptide is ATP synthase subunit a, chloroplastic (Rhodomonas salina (Cryptomonas salina)).